The following is a 351-amino-acid chain: L-threonine 3-dehydrogenase (351 aa).

Position 42 (Cys-42) interacts with Zn(2+). Active-site charge relay system residues include Thr-44 and His-47. Residues His-67, Glu-68, Cys-97, Cys-100, Cys-103, and Cys-111 each coordinate Zn(2+). Residues Ile-179, Asp-199, Arg-204, Leu-266–Leu-268, and Ile-291–Thr-292 contribute to the NAD(+) site.

It belongs to the zinc-containing alcohol dehydrogenase family. In terms of assembly, homotetramer. The cofactor is Zn(2+).

The protein resides in the cytoplasm. It carries out the reaction L-threonine + NAD(+) = (2S)-2-amino-3-oxobutanoate + NADH + H(+). It functions in the pathway amino-acid degradation; L-threonine degradation via oxydo-reductase pathway; glycine from L-threonine: step 1/2. Functionally, catalyzes the NAD(+)-dependent oxidation of L-threonine to 2-amino-3-ketobutyrate. This is L-threonine 3-dehydrogenase from Symbiobacterium thermophilum (strain DSM 24528 / JCM 14929 / IAM 14863 / T).